Here is a 301-residue protein sequence, read N- to C-terminus: Sulfate adenylyltransferase subunit 2 (301 aa).

The protein belongs to the PAPS reductase family. CysD subfamily. As to quaternary structure, heterodimer composed of CysD, the smaller subunit, and CysN.

The enzyme catalyses sulfate + ATP + H(+) = adenosine 5'-phosphosulfate + diphosphate. Its pathway is sulfur metabolism; hydrogen sulfide biosynthesis; sulfite from sulfate: step 1/3. Functionally, with CysN forms the ATP sulfurylase (ATPS) that catalyzes the adenylation of sulfate producing adenosine 5'-phosphosulfate (APS) and diphosphate, the first enzymatic step in sulfur assimilation pathway. APS synthesis involves the formation of a high-energy phosphoric-sulfuric acid anhydride bond driven by GTP hydrolysis by CysN coupled to ATP hydrolysis by CysD. The polypeptide is Sulfate adenylyltransferase subunit 2 (Trichlorobacter lovleyi (strain ATCC BAA-1151 / DSM 17278 / SZ) (Geobacter lovleyi)).